A 172-amino-acid chain; its full sequence is Protein GrpE (172 aa).

The tract at residues 1–23 (MNQDHPECDSEELTQNSPETDPL) is disordered.

This sequence belongs to the GrpE family. Homodimer.

The protein resides in the cytoplasm. Functionally, participates actively in the response to hyperosmotic and heat shock by preventing the aggregation of stress-denatured proteins, in association with DnaK and GrpE. It is the nucleotide exchange factor for DnaK and may function as a thermosensor. Unfolded proteins bind initially to DnaJ; upon interaction with the DnaJ-bound protein, DnaK hydrolyzes its bound ATP, resulting in the formation of a stable complex. GrpE releases ADP from DnaK; ATP binding to DnaK triggers the release of the substrate protein, thus completing the reaction cycle. Several rounds of ATP-dependent interactions between DnaJ, DnaK and GrpE are required for fully efficient folding. This is Protein GrpE from Xylella fastidiosa (strain M23).